A 110-amino-acid chain; its full sequence is MPSPILPMLPISHLIGTEVRNLISVRTPNITMDQLKNGCCSILTQLETLLRSQSPSEMTIFQTLCDRCCGAEVANEATVECGKTMETTNLTSGGRYWPFHNGTNLSRISL.

It localises to the mitochondrion. This is an uncharacterized protein from Arabidopsis thaliana (Mouse-ear cress).